Consider the following 133-residue polypeptide: Mediator of RNA polymerase II transcription subunit 10 (133 aa).

This sequence belongs to the Mediator complex subunit 10 family. In terms of assembly, component of the Mediator complex. Interacts with MED4 and MED21.

It localises to the nucleus. Component of the Mediator complex, a coactivator involved in the regulated transcription of nearly all RNA polymerase II-dependent genes. Mediator functions as a bridge to convey information from gene-specific regulatory proteins to the basal RNA polymerase II transcription machinery. Mediator is recruited to promoters by direct interactions with regulatory proteins and serves as a scaffold for the assembly of a functional preinitiation complex with RNA polymerase II and the general transcription factors. Required for activated transcription of the MtnA, MtnB and MtnD genes. The chain is Mediator of RNA polymerase II transcription subunit 10 (MED10) from Drosophila melanogaster (Fruit fly).